A 260-amino-acid polypeptide reads, in one-letter code: Diphthine synthase (260 aa).

Residues Leu9, Asp85, Ile88, 113-114 (TA), Leu168, Ala202, and His227 contribute to the S-adenosyl-L-methionine site.

The protein belongs to the diphthine synthase family. In terms of assembly, homodimer.

The catalysed reaction is 2-[(3S)-amino-3-carboxypropyl]-L-histidyl-[translation elongation factor 2] + 3 S-adenosyl-L-methionine = diphthine-[translation elongation factor 2] + 3 S-adenosyl-L-homocysteine + 3 H(+). The protein operates within protein modification; peptidyl-diphthamide biosynthesis. Functionally, S-adenosyl-L-methionine-dependent methyltransferase that catalyzes the trimethylation of the amino group of the modified target histidine residue in translation elongation factor 2 (EF-2), to form an intermediate called diphthine. The three successive methylation reactions represent the second step of diphthamide biosynthesis. The chain is Diphthine synthase from Haloquadratum walsbyi (strain DSM 16790 / HBSQ001).